The sequence spans 221 residues: Penicillin-binding protein activator LpoB (221 aa).

A signal peptide spans 1–20; that stretch reads MLNRMYRYALLATVALALSG. C21 carries N-palmitoyl cysteine lipidation. C21 is lipidated: S-diacylglycerol cysteine. Residues 29–82 form a disordered region; that stretch reads PAPVEEAQPGTQQPTQPVPPPTQPVPTVPSVPSIPAQPGPIEHQPENATPEPKA. Pro residues predominate over residues 44 to 57; sequence QPVPPPTQPVPTVP.

The protein belongs to the LpoB family. Interacts with PBP1b.

It localises to the cell outer membrane. In terms of biological role, regulator of peptidoglycan synthesis that is essential for the function of penicillin-binding protein 1B (PBP1b). This Cronobacter turicensis (strain DSM 18703 / CCUG 55852 / LMG 23827 / z3032) protein is Penicillin-binding protein activator LpoB.